The following is a 211-amino-acid chain: GTP pyrophosphokinase YjbM (211 aa).

Guanosine 3'-diphosphate 5'-triphosphate contacts are provided by residues 21 to 28, 41 to 42, and 46 to 48; these read KVKLKGIR, EF, and RVK. ATP contacts are provided by residues 46–48, S52, 56–59, D72, and R77; these read RVK and KARR. R59 lines the guanosine 3'-diphosphate 5'-triphosphate pocket. A Mg(2+)-binding site is contributed by D72. Guanosine 3'-diphosphate 5'-triphosphate contacts are provided by residues R105, 112–114, and H120; that span reads KES. E139 serves as the catalytic Proton acceptor. Guanosine 3'-diphosphate 5'-triphosphate contacts are provided by residues N148 and 151–155; that span reads ATIEH.

The protein belongs to the RelA/SpoT family. As to quaternary structure, homotetramer.

The enzyme catalyses GTP + ATP = guanosine 3'-diphosphate 5'-triphosphate + AMP. It carries out the reaction GDP + ATP = guanosine 3',5'-bis(diphosphate) + AMP. It participates in purine metabolism; ppGpp biosynthesis; ppGpp from GTP: step 1/2. Allosterically regulated by its own products; pppGpp simulates synthesis 10-fold more than ppGpp. 2 pppGpp molecules bind in a regulatory cleft in the middle of the tetramer in an asymmetric manner. There is a specific contact of Lys-25 to the gamma-phosphate of pppGpp, explaining why pppGpp stimulates activity but ppGpp does not. Functions as a (p)ppGpp synthase; GDP can be used instead of GTP, resulting in an increase of (p)ppGpp synthesis. The enzyme binds ATP, then GDP or GTP and catalysis is highly cooperative. In eubacteria ppGpp (guanosine 3'-diphosphate 5'-diphosphate) is a mediator of the stringent response that coordinates a variety of cellular activities in response to changes in nutritional abundance. Probably has a minor role in the stringent response. The chain is GTP pyrophosphokinase YjbM (yjbM) from Bacillus subtilis (strain 168).